Here is a 403-residue protein sequence, read N- to C-terminus: Aminomethyltransferase, mitochondrial (403 aa).

The transit peptide at 1 to 28 (MQRAMTVVPHLGLRLQALPLALGRPLSR) directs the protein to the mitochondrion. Substrate-binding residues include glutamate 232, arginine 261, and tyrosine 399.

It belongs to the GcvT family. In terms of assembly, the glycine cleavage system is composed of four proteins: P, T, L and H.

The protein localises to the mitochondrion. It carries out the reaction N(6)-[(R)-S(8)-aminomethyldihydrolipoyl]-L-lysyl-[protein] + (6S)-5,6,7,8-tetrahydrofolate = N(6)-[(R)-dihydrolipoyl]-L-lysyl-[protein] + (6R)-5,10-methylene-5,6,7,8-tetrahydrofolate + NH4(+). Its function is as follows. The glycine cleavage system catalyzes the degradation of glycine. This is Aminomethyltransferase, mitochondrial from Canis lupus familiaris (Dog).